A 144-amino-acid polypeptide reads, in one-letter code: Small ribosomal subunit protein eS12z (144 aa).

S2 bears the N-acetylserine mark.

This sequence belongs to the eukaryotic ribosomal protein eS12 family.

In Arabidopsis thaliana (Mouse-ear cress), this protein is Small ribosomal subunit protein eS12z (RPS12A).